The primary structure comprises 98 residues: Acylphosphatase (98 aa).

In terms of domain architecture, Acylphosphatase-like spans 12-98 (TYYVRVRGVV…DKRFERFQQH (87 aa)). Residues Arg27 and Asn45 contribute to the active site.

The protein belongs to the acylphosphatase family.

The catalysed reaction is an acyl phosphate + H2O = a carboxylate + phosphate + H(+). This is Acylphosphatase (acyP) from Burkholderia thailandensis (strain ATCC 700388 / DSM 13276 / CCUG 48851 / CIP 106301 / E264).